Here is a 286-residue protein sequence, read N- to C-terminus: Polyamine aminopropyltransferase (286 aa).

The 234-residue stretch at 5–238 (KIWHEKLHRH…GTMMFSWGTD (234 aa)) folds into the PABS domain. Positions 64 and 88 each coordinate spermidine. S-methyl-5'-thioadenosine contacts are provided by residues Glu108 and 140–141 (NG). The active-site Proton acceptor is Asp158. 158 to 161 (DSTD) lines the spermidine pocket.

Belongs to the spermidine/spermine synthase family. As to quaternary structure, homodimer or homotetramer.

The protein localises to the cytoplasm. The catalysed reaction is S-adenosyl 3-(methylsulfanyl)propylamine + putrescine = S-methyl-5'-thioadenosine + spermidine + H(+). Its pathway is amine and polyamine biosynthesis; spermidine biosynthesis; spermidine from putrescine: step 1/1. Functionally, catalyzes the irreversible transfer of a propylamine group from the amino donor S-adenosylmethioninamine (decarboxy-AdoMet) to putrescine (1,4-diaminobutane) to yield spermidine. The sequence is that of Polyamine aminopropyltransferase from Buchnera aphidicola subsp. Schizaphis graminum (strain Sg).